The primary structure comprises 110 residues: Bowman-Birk type proteinase inhibitor (110 aa).

An N-terminal signal peptide occupies residues 1–28; it reads MVLMNKKAIMKLALMLFLLGFTANVVDA. A propeptide spanning residues 29-42 is cleaved from the precursor; it reads RFDSTSFITQVLSN. 7 cysteine pairs are disulfide-bonded: C50–C103, C51–C66, C54–C99, C56–C64, C73–C80, C77–C92, and C82–C90.

In terms of assembly, monomer.

Inhibitor of trypsin and of chymotrypsin. This Lens culinaris (Lentil) protein is Bowman-Birk type proteinase inhibitor.